We begin with the raw amino-acid sequence, 175 residues long: MKELKYYEKVALSNFDILEMLDNKAEIVLYPNLIKYETIDDVLGPYGACVLLFEAKKNYGHWCCLFKREDNSIEFFNSYGGYPDNSLKYIPLHYREISNQYYPYLSLLLLKYPHKLYYNEFKFQKRANDIRTCGRWCVLRLLLKHLDIYEFKKYVDDMCSYYKVTPDELVTMITI.

This is an uncharacterized protein from Acanthamoeba polyphaga (Amoeba).